A 337-amino-acid chain; its full sequence is Phosphate acyltransferase (337 aa).

It belongs to the PlsX family. In terms of assembly, homodimer. Probably interacts with PlsY.

The protein resides in the cytoplasm. The catalysed reaction is a fatty acyl-[ACP] + phosphate = an acyl phosphate + holo-[ACP]. It functions in the pathway lipid metabolism; phospholipid metabolism. In terms of biological role, catalyzes the reversible formation of acyl-phosphate (acyl-PO(4)) from acyl-[acyl-carrier-protein] (acyl-ACP). This enzyme utilizes acyl-ACP as fatty acyl donor, but not acyl-CoA. This is Phosphate acyltransferase from Ehrlichia canis (strain Jake).